The primary structure comprises 275 residues: Elongation factor Ts (275 aa).

Positions 80-83 are involved in Mg(2+) ion dislocation from EF-Tu; the sequence is TDFV.

Belongs to the EF-Ts family.

It localises to the cytoplasm. Associates with the EF-Tu.GDP complex and induces the exchange of GDP to GTP. It remains bound to the aminoacyl-tRNA.EF-Tu.GTP complex up to the GTP hydrolysis stage on the ribosome. The polypeptide is Elongation factor Ts (Clavibacter michiganensis subsp. michiganensis (strain NCPPB 382)).